Reading from the N-terminus, the 477-residue chain is Cytochrome c oxidase subunit 1 (477 aa).

Residues valine 16–tryptophan 36 traverse the membrane as a helical segment. Residues glutamate 41 and glycine 46 each contribute to the Ca(2+) site. Residue histidine 62 participates in Fe(II)-heme a binding. A run of 6 helical transmembrane segments spans residues isoleucine 64–leucine 84, phenylalanine 101–tyrosine 121, isoleucine 149–leucine 171, leucine 185–alanine 205, leucine 236–valine 256, and valine 269–valine 289. Histidine 242 is a binding site for Cu cation. A cross-link (1'-histidyl-3'-tyrosine (His-Tyr)) is located at residues histidine 242–tyrosine 246. An O2-binding site is contributed by tyrosine 246. The Cu cation site is built by histidine 292 and histidine 293. Transmembrane regions (helical) follow at residues alanine 309–isoleucine 329 and threonine 340–leucine 360. Histidine 370 and aspartate 371 together coordinate Mg(2+). Histidine 378 lines the heme a3 pocket. Residue histidine 380 participates in Fe(II)-heme a binding. The next 2 helical transmembrane spans lie at valine 382–phenylalanine 402 and phenylalanine 416–glycine 436. Proline 443 lines the Ca(2+) pocket. A helical membrane pass occupies residues tryptophan 455 to tryptophan 475.

It belongs to the heme-copper respiratory oxidase family. In terms of assembly, component of the cytochrome c oxidase (complex IV, CIV), a multisubunit enzyme composed of a catalytic core of 3 subunits and several supernumerary subunits. The complex exists as a monomer or a dimer and forms supercomplexes (SCs) in the inner mitochondrial membrane with ubiquinol-cytochrome c oxidoreductase (cytochrome b-c1 complex, complex III, CIII). Requires heme as cofactor. Cu cation is required as a cofactor.

Its subcellular location is the mitochondrion inner membrane. The catalysed reaction is 4 Fe(II)-[cytochrome c] + O2 + 8 H(+)(in) = 4 Fe(III)-[cytochrome c] + 2 H2O + 4 H(+)(out). The protein operates within energy metabolism; oxidative phosphorylation. In terms of biological role, component of the cytochrome c oxidase, the last enzyme in the mitochondrial electron transport chain which drives oxidative phosphorylation. The respiratory chain contains 3 multisubunit complexes succinate dehydrogenase (complex II, CII), ubiquinol-cytochrome c oxidoreductase (cytochrome b-c1 complex, complex III, CIII) and cytochrome c oxidase (complex IV, CIV), that cooperate to transfer electrons derived from NADH and succinate to molecular oxygen, creating an electrochemical gradient over the inner membrane that drives transmembrane transport and the ATP synthase. Cytochrome c oxidase is the component of the respiratory chain that catalyzes the reduction of oxygen to water. Electrons originating from reduced cytochrome c in the intermembrane space (IMS) are transferred via the dinuclear copper A center (CU(A)) of subunit 2 and heme A of subunit 1 to the active site in subunit 1, a binuclear center (BNC) formed by heme A3 and copper B (CU(B)). The BNC reduces molecular oxygen to 2 water molecules using 4 electrons from cytochrome c in the IMS and 4 protons from the mitochondrial matrix. This Pecten maximus (King scallop) protein is Cytochrome c oxidase subunit 1 (COI).